Consider the following 60-residue polypeptide: Large ribosomal subunit protein bL32 (60 aa).

The segment at 1 to 60 (MAVQQNKKSPSKRGMHRSHNALTVPGIAVESTTGETHLRHHISPTGFYRGRKVLKTKSEA) is disordered. Composition is skewed to basic residues over residues 9–19 (SPSKRGMHRSH) and 49–60 (RGRKVLKTKSEA).

Belongs to the bacterial ribosomal protein bL32 family.

The polypeptide is Large ribosomal subunit protein bL32 (Polaromonas sp. (strain JS666 / ATCC BAA-500)).